We begin with the raw amino-acid sequence, 51 residues long: Light-harvesting protein B800/850/890 beta-2 chain (51 aa).

Topologically, residues 1 to 17 are cytoplasmic; that stretch reads ADEMRNVSDEEAKEFHA. A bacteriochlorophyll contacts are provided by His-16 and His-34. Residues 18 to 40 form a helical membrane-spanning segment; the sequence is MFSQAFTVYVGVAVVAHILAWAW. At 41–51 the chain is on the periplasmic side; sequence RPWIPGDEGFG.

Belongs to the antenna complex beta subunit family. As to quaternary structure, the core complex is formed by different alpha and beta chains, binding bacteriochlorophyll molecules, and arranged most probably in tetrameric structures disposed around the reaction center. The non-pigmented gamma chains may constitute additional components.

The protein resides in the cell inner membrane. In terms of biological role, antenna complexes are light-harvesting systems, which transfer the excitation energy to the reaction centers. The protein is Light-harvesting protein B800/850/890 beta-2 chain of Halorhodospira halophila (strain DSM 244 / SL1) (Ectothiorhodospira halophila (strain DSM 244 / SL1)).